A 302-amino-acid polypeptide reads, in one-letter code: tRNA pseudouridine synthase B (302 aa).

Asp40 (nucleophile) is an active-site residue.

This sequence belongs to the pseudouridine synthase TruB family. Type 1 subfamily.

It carries out the reaction uridine(55) in tRNA = pseudouridine(55) in tRNA. In terms of biological role, responsible for synthesis of pseudouridine from uracil-55 in the psi GC loop of transfer RNAs. The sequence is that of tRNA pseudouridine synthase B from Shouchella clausii (strain KSM-K16) (Alkalihalobacillus clausii).